A 426-amino-acid chain; its full sequence is Histidine--tRNA ligase (426 aa).

Belongs to the class-II aminoacyl-tRNA synthetase family. In terms of assembly, homodimer.

It is found in the cytoplasm. The enzyme catalyses tRNA(His) + L-histidine + ATP = L-histidyl-tRNA(His) + AMP + diphosphate + H(+). This chain is Histidine--tRNA ligase, found in Chlorobium phaeovibrioides (strain DSM 265 / 1930) (Prosthecochloris vibrioformis (strain DSM 265)).